A 412-amino-acid chain; its full sequence is Transcription termination factor 3, mitochondrial (412 aa).

A mitochondrion-targeting transit peptide spans 1–67 (MALLAQQLPR…IKTYRTLFWN (67 aa)).

Belongs to the mTERF family.

Its subcellular location is the mitochondrion. In terms of biological role, binds promoter DNA and regulates initiation of transcription. Required for normal mitochondrial transcription and translation, and for normal assembly of mitochondrial respiratory complexes. Required for normal mitochondrial function. Maintains 16S rRNA levels and functions in mitochondrial ribosome assembly by regulating the biogenesis of the 39S ribosomal subunit. The chain is Transcription termination factor 3, mitochondrial (Mterf3) from Mus musculus (Mouse).